Here is a 121-residue protein sequence, read N- to C-terminus: Small ribosomal subunit protein uS13 (121 aa).

A disordered region spans residues arginine 94–arginine 121. The segment covering alanine 107–arginine 121 has biased composition (basic residues).

It belongs to the universal ribosomal protein uS13 family. In terms of assembly, part of the 30S ribosomal subunit. Forms a loose heterodimer with protein S19. Forms two bridges to the 50S subunit in the 70S ribosome.

Functionally, located at the top of the head of the 30S subunit, it contacts several helices of the 16S rRNA. In the 70S ribosome it contacts the 23S rRNA (bridge B1a) and protein L5 of the 50S subunit (bridge B1b), connecting the 2 subunits; these bridges are implicated in subunit movement. Contacts the tRNAs in the A and P-sites. The sequence is that of Small ribosomal subunit protein uS13 from Natranaerobius thermophilus (strain ATCC BAA-1301 / DSM 18059 / JW/NM-WN-LF).